Here is a 474-residue protein sequence, read N- to C-terminus: 3-isopropylmalate dehydratase large subunit (474 aa).

Residues cysteine 355, cysteine 415, and cysteine 418 each contribute to the [4Fe-4S] cluster site.

The protein belongs to the aconitase/IPM isomerase family. LeuC type 1 subfamily. In terms of assembly, heterodimer of LeuC and LeuD. [4Fe-4S] cluster is required as a cofactor.

The enzyme catalyses (2R,3S)-3-isopropylmalate = (2S)-2-isopropylmalate. The protein operates within amino-acid biosynthesis; L-leucine biosynthesis; L-leucine from 3-methyl-2-oxobutanoate: step 2/4. Its function is as follows. Catalyzes the isomerization between 2-isopropylmalate and 3-isopropylmalate, via the formation of 2-isopropylmaleate. This chain is 3-isopropylmalate dehydratase large subunit, found in Shewanella sp. (strain MR-7).